Here is a 294-residue protein sequence, read N- to C-terminus: Acetyl-coenzyme A carboxylase carboxyl transferase subunit beta (294 aa).

Residues 30–294 (IMTKCPECKK…PEVGGEADGE (265 aa)) form the CoA carboxyltransferase N-terminal domain. Residues Cys-34, Cys-37, Cys-53, and Cys-56 each coordinate Zn(2+). The C4-type zinc-finger motif lies at 34–56 (CPECKKIMYTKELQKNLMVCNYC).

This sequence belongs to the AccD/PCCB family. In terms of assembly, acetyl-CoA carboxylase is a heterohexamer composed of biotin carboxyl carrier protein (AccB), biotin carboxylase (AccC) and two subunits each of ACCase subunit alpha (AccA) and ACCase subunit beta (AccD). Zn(2+) serves as cofactor.

It localises to the cytoplasm. The enzyme catalyses N(6)-carboxybiotinyl-L-lysyl-[protein] + acetyl-CoA = N(6)-biotinyl-L-lysyl-[protein] + malonyl-CoA. Its pathway is lipid metabolism; malonyl-CoA biosynthesis; malonyl-CoA from acetyl-CoA: step 1/1. Component of the acetyl coenzyme A carboxylase (ACC) complex. Biotin carboxylase (BC) catalyzes the carboxylation of biotin on its carrier protein (BCCP) and then the CO(2) group is transferred by the transcarboxylase to acetyl-CoA to form malonyl-CoA. The chain is Acetyl-coenzyme A carboxylase carboxyl transferase subunit beta from Listeria monocytogenes serotype 4b (strain F2365).